Here is a 75-residue protein sequence, read N- to C-terminus: CDC42 small effector protein 2-C (75 aa).

2 S-palmitoyl cysteine lipidation sites follow: C10 and C11. Positions 29-42 constitute a CRIB domain; it reads IGEPMNFVHTAHVG.

Belongs to the CDC42SE/SPEC family.

The protein resides in the cytoplasm. Its subcellular location is the cytoskeleton. It is found in the cell membrane. Probably involved in the organization of the actin cytoskeleton by acting downstream of CDC42, inducing actin filament assembly. The chain is CDC42 small effector protein 2-C (cdc42se2-c) from Xenopus laevis (African clawed frog).